The sequence spans 373 residues: UDP-sugar transporter UST74c (373 aa).

Residues 27–49 (LEEKMGGSADRSSLLDGSGSKEL) form a disordered region. A Phosphoserine modification is found at serine 50. The next 8 helical transmembrane spans lie at 89 to 111 (HFPSFLFLSLGQLTASIVVLGMG), 131 to 153 (FPLPLIFLGNMMFGLGGTKTLSL), 174 to 196 (ILGLRPSNAVQVSVYAMIGGALL), 206 to 225 (MRGYIYVMITNALTASNGVY), 238 to 260 (YGLMYYNSLFMFLPALALNYVTG), 275 to 297 (VFVVQFLLSCVMGFILSYSTILC), 302 to 324 (SALTTTIVGCLKNICVTYLGMFI), and 329 to 351 (VFSWLNCIGINISVLASLLYTYV).

This sequence belongs to the TPT transporter family. SLC35D subfamily.

It localises to the golgi apparatus membrane. Involved in the import of UDP-sugars from the cytoplasm into the Golgi lumen. The chain is UDP-sugar transporter UST74c (frc) from Drosophila melanogaster (Fruit fly).